A 141-amino-acid polypeptide reads, in one-letter code: Lutropin subunit beta (141 aa).

The first 20 residues, 1–20, serve as a signal peptide directing secretion; that stretch reads MEMLQGLLLLLLLSMGGAWA. 6 cysteine pairs are disulfide-bonded: Cys-29–Cys-77, Cys-43–Cys-92, Cys-46–Cys-130, Cys-54–Cys-108, Cys-58–Cys-110, and Cys-113–Cys-120. N-linked (GlcNAc...) asparagine glycans are attached at residues Asn-33 and Asn-50.

Belongs to the glycoprotein hormones subunit beta family. Heterodimer of a common alpha chain and a unique beta chain which confers biological specificity to thyrotropin, lutropin, follitropin and gonadotropin.

Its subcellular location is the secreted. Functionally, promotes spermatogenesis and ovulation by stimulating the testes and ovaries to synthesize steroids. The protein is Lutropin subunit beta (LHB) of Gorilla gorilla gorilla (Western lowland gorilla).